A 385-amino-acid chain; its full sequence is Eukaryotic translation initiation factor 3 subunit M (385 aa).

Residues 180–342 (NSELASKVMI…RKVHISSTMH (163 aa)) form the PCI domain.

It belongs to the eIF-3 subunit M family. In terms of assembly, component of the eukaryotic translation initiation factor 3 (eIF-3) complex.

Its subcellular location is the cytoplasm. In terms of biological role, component of the eukaryotic translation initiation factor 3 (eIF-3) complex, which is involved in protein synthesis of a specialized repertoire of mRNAs and, together with other initiation factors, stimulates binding of mRNA and methionyl-tRNAi to the 40S ribosome. The eIF-3 complex specifically targets and initiates translation of a subset of mRNAs involved in cell proliferation. This chain is Eukaryotic translation initiation factor 3 subunit M, found in Anopheles gambiae (African malaria mosquito).